Reading from the N-terminus, the 537-residue chain is CTP synthase (537 aa).

The tract at residues 1-267 (MTKYIFVTGG…DQIVCDHLKL (267 aa)) is amidoligase domain. Ser13 contacts CTP. Residue Ser13 coordinates UTP. 14–19 (SIGKGI) lines the ATP pocket. Tyr54 provides a ligand contact to L-glutamine. Asp71 provides a ligand contact to ATP. 2 residues coordinate Mg(2+): Asp71 and Glu141. CTP is bound by residues 148 to 150 (DIE), 188 to 193 (KTKPTQ), and Lys224. UTP is bound by residues 188–193 (KTKPTQ) and Lys224. ATP is bound at residue 240–242 (RDV). One can recognise a Glutamine amidotransferase type-1 domain in the interval 292–535 (RIALVGKYVE…VTAAVKNKNQ (244 aa)). Gly354 lines the L-glutamine pocket. Cys381 serves as the catalytic Nucleophile; for glutamine hydrolysis. Residues 382-385 (LGMQ), Glu405, and Arg463 contribute to the L-glutamine site. Catalysis depends on residues His508 and Glu510.

This sequence belongs to the CTP synthase family. In terms of assembly, homotetramer.

It catalyses the reaction UTP + L-glutamine + ATP + H2O = CTP + L-glutamate + ADP + phosphate + 2 H(+). The enzyme catalyses L-glutamine + H2O = L-glutamate + NH4(+). The catalysed reaction is UTP + NH4(+) + ATP = CTP + ADP + phosphate + 2 H(+). It participates in pyrimidine metabolism; CTP biosynthesis via de novo pathway; CTP from UDP: step 2/2. Its activity is regulated as follows. Allosterically activated by GTP, when glutamine is the substrate; GTP has no effect on the reaction when ammonia is the substrate. The allosteric effector GTP functions by stabilizing the protein conformation that binds the tetrahedral intermediate(s) formed during glutamine hydrolysis. Inhibited by the product CTP, via allosteric rather than competitive inhibition. Catalyzes the ATP-dependent amination of UTP to CTP with either L-glutamine or ammonia as the source of nitrogen. Regulates intracellular CTP levels through interactions with the four ribonucleotide triphosphates. In Streptococcus equi subsp. equi (strain 4047), this protein is CTP synthase.